The chain runs to 379 residues: UDP-4-amino-4-deoxy-L-arabinose--oxoglutarate aminotransferase (379 aa).

An N6-(pyridoxal phosphate)lysine modification is found at lysine 182.

This sequence belongs to the DegT/DnrJ/EryC1 family. ArnB subfamily. Homodimer. The cofactor is pyridoxal 5'-phosphate.

It carries out the reaction UDP-4-amino-4-deoxy-beta-L-arabinose + 2-oxoglutarate = UDP-beta-L-threo-pentopyranos-4-ulose + L-glutamate. The protein operates within nucleotide-sugar biosynthesis; UDP-4-deoxy-4-formamido-beta-L-arabinose biosynthesis; UDP-4-deoxy-4-formamido-beta-L-arabinose from UDP-alpha-D-glucuronate: step 2/3. It functions in the pathway bacterial outer membrane biogenesis; lipopolysaccharide biosynthesis. Functionally, catalyzes the conversion of UDP-4-keto-arabinose (UDP-Ara4O) to UDP-4-amino-4-deoxy-L-arabinose (UDP-L-Ara4N). The modified arabinose is attached to lipid A and is required for resistance to polymyxin and cationic antimicrobial peptides. This is UDP-4-amino-4-deoxy-L-arabinose--oxoglutarate aminotransferase from Salmonella paratyphi A (strain ATCC 9150 / SARB42).